Here is a 248-residue protein sequence, read N- to C-terminus: Triosephosphate isomerase (248 aa).

Position 9–11 (9–11 (NWK)) interacts with substrate. The Electrophile role is filled by histidine 94. Residue glutamate 166 is the Proton acceptor of the active site. Substrate contacts are provided by residues glycine 172, serine 211, and 232 to 233 (GG).

Belongs to the triosephosphate isomerase family. As to quaternary structure, homodimer.

The protein localises to the cytoplasm. It catalyses the reaction D-glyceraldehyde 3-phosphate = dihydroxyacetone phosphate. Its pathway is carbohydrate biosynthesis; gluconeogenesis. It functions in the pathway carbohydrate degradation; glycolysis; D-glyceraldehyde 3-phosphate from glycerone phosphate: step 1/1. Its function is as follows. Involved in the gluconeogenesis. Catalyzes stereospecifically the conversion of dihydroxyacetone phosphate (DHAP) to D-glyceraldehyde-3-phosphate (G3P). The polypeptide is Triosephosphate isomerase (Ruthia magnifica subsp. Calyptogena magnifica).